The chain runs to 307 residues: Elongation factor Ts (307 aa).

The involved in Mg(2+) ion dislocation from EF-Tu stretch occupies residues 80–83; it reads TDFV.

The protein belongs to the EF-Ts family.

Its subcellular location is the cytoplasm. Its function is as follows. Associates with the EF-Tu.GDP complex and induces the exchange of GDP to GTP. It remains bound to the aminoacyl-tRNA.EF-Tu.GTP complex up to the GTP hydrolysis stage on the ribosome. The chain is Elongation factor Ts from Rhodopseudomonas palustris (strain BisA53).